A 210-amino-acid polypeptide reads, in one-letter code: Large ribosomal subunit protein uL4 (210 aa).

A disordered region spans residues 44–79; the sequence is QHQGTHKVKTRSEVSGGGRKPYRQKGTGNARRGSSR.

The protein belongs to the universal ribosomal protein uL4 family. Part of the 50S ribosomal subunit.

In terms of biological role, one of the primary rRNA binding proteins, this protein initially binds near the 5'-end of the 23S rRNA. It is important during the early stages of 50S assembly. It makes multiple contacts with different domains of the 23S rRNA in the assembled 50S subunit and ribosome. Functionally, forms part of the polypeptide exit tunnel. The chain is Large ribosomal subunit protein uL4 from Chloroherpeton thalassium (strain ATCC 35110 / GB-78).